We begin with the raw amino-acid sequence, 1640 residues long: MYFFTPPQKRTLKPVVDRVLQQQQQQQQQQQQQSLPKFQPFEVETYSLEDEKYLYNISYFSKEEIKLLYDLFHRINLDLDGFTENIIYQTLSFLVHIPSGIEELSSLFYNEDVIYRKEINSSHRSNQSFNHSNSTTPLNTTNNNIKKPTTTTTTNSNNINNNGNVNGNNTTNLDDILNNHNDNYSSDNSYLHNIYDDIYEDEDDEDDEDDDDDEDEDDEGKEFEQDDEDESTISSMSLKNSQAKRLSKKMNSIDLNVDEISSTHNQNHQNHQNHQNHHHHTTTHMIEKKITTTINKIKQKISNESSGLLCEVVGAGGAGTEGASSSTTTTTTLSNDLQTNESIKFVEDEKQQLKQQLRKQLLKDGNHNSLNNILYDYKHPNDINTPIEELTAAATTTTTTTSTTTTTNDHQNLEKTIISNKTIKKLEGVETIKDTVELEKQQQKQQQTSNVTTAKVKDTILSSSPKTTTTATTNNNNNNNNNNNNNNNNNNNNNSYKYNSYLESSNISNISNASYTDKPMDDEYYYGEYDDEDDSKPPSQEKIESINLYRSQFSIIRDCNLWGGKTLKEDEFDYIDSSSEILKYRMIIKYMVENLFSYIRKRYNLEANKNPSIIHLIEIISIMTRGTLKEKSELVFKLVRKKSEGVVYKTELLEMIQGIDALTVLNVFGLGSIGTPDEVVNNIYREGLSTVNSIQRTPSFPRSDSFYQKSMSSEQPFFKDTSLEMKEFIKRSVSNSDIPRCFGFFDLIYLCYIKPIEDYLKSSIKYKQASGYLYYEKYLGIIKAYSLRWFEVRSGFLIGYKRLFSKPSKVICLFKTNVKIIPKEHPKHHMKLKSLFKGSLSKQIDGNKEATDFVLRRFDDTEQTFISLSSHRASNFVNAIRENSKGSYRYHSFASPQEDINVVPYINGSTYFKGVYKALKHATSEIYIAGWWISPNVSLNRTATSKTPDKYRLDSVLMKKASEGVKIYILIWDETMIAMDLGSRGVKSFFEKMHRRNIKVIRHPHMLPLYWSHHQKVVVVDQRIAFIGGLDLCFGRYDNEYYFVKDNLEINFPGADYINSCIAKPVNNLKDCLVDRNTQPRMPWHDVSISLDGKAARDVTYNFIQRWNHAKDSNRDYKSYPYLITSLETPLNIPHPQPPTQFLHPNTNINNNNNNANNNTNNINNNNNNNNINNLNSSTNTTNNTNNTTTTTNNNNLNTSTNMLPINNNNNNLNTSTNILPNNNNNNNNNNNNNNNNNNNNNNNNNNINNNNTTSTTTTTTTNNNLNSSSNNLNFNISGEIHNNSLPHQLNNQQQQQHHHHHHHHYQPPLPPQQRGTCKVQIVRSVCGWSAGQVLENSIYKAYLNLINLSQHFIYIQNQFFISSVGFTQPNNQIAFAIYKRIEKAVLLNQVFRVILLLPVHCEGDIYDVDTQLIIKYTEKSITGIKTELLKKFPEMDIDQYLSINSLRNWDANGDIIFTEQIYVHSKVLIVDDKIAIIGSANINDRSLNGSRDSEICAIIEDRDLVDSRVNGLPYKAAKFAHNLRCNLWEYHLGLISNPDPLLSDRIKDLVIDSTYHDIWRNMAQRNSAIYKEIFGTTIPENCTKTSQYNRGSIKLTSEALETLCGINGFLIEYNTSMLSELETPTSIYSDIITSMKLFL.

The span at 122 to 132 (SHRSNQSFNHS) shows a compositional bias: polar residues. Disordered stretches follow at residues 122-247 (SHRS…KRLS), 264-283 (HNQN…HTTT), 439-499 (EKQQ…YKYN), and 521-541 (DDEY…PSQE). The segment covering 133–193 (NSTTPLNTTN…YSSDNSYLHN (61 aa)) has biased composition (low complexity). Residues 197-231 (DIYEDEDDEDDEDDDDDEDEDDEGKEFEQDDEDES) show a composition bias toward acidic residues. Polar residues predominate over residues 232 to 247 (TISSMSLKNSQAKRLS). 2 stretches are compositionally biased toward low complexity: residues 264–273 (HNQNHQNHQN) and 467–499 (TTTT…YKYN). A compositionally biased stretch (acidic residues) spans 521–534 (DDEYYYGEYDDEDD). In terms of domain architecture, PLD phosphodiesterase 1 spans 1009 to 1036 (LYWSHHQKVVVVDQRIAFIGGLDLCFGR). Active-site residues include histidine 1014, lysine 1016, and aspartate 1021. Composition is skewed to low complexity over residues 1149–1274 (INNN…NNLN) and 1282–1296 (HNNS…QQQQ). The interval 1149–1315 (INNNNNNANN…YQPPLPPQQR (167 aa)) is disordered. The segment covering 1297–1306 (QHHHHHHHHY) has biased composition (basic residues). Positions 1460–1487 (EQIYVHSKVLIVDDKIAIIGSANINDRS) constitute a PLD phosphodiesterase 2 domain. Residues histidine 1465, lysine 1467, and aspartate 1472 contribute to the active site.

It belongs to the phospholipase D family.

It catalyses the reaction a 1,2-diacyl-sn-glycero-3-phosphocholine + H2O = a 1,2-diacyl-sn-glycero-3-phosphate + choline + H(+). Inhibited by butan-1-ol. Its function is as follows. Plays a role in cell growth. Hydrolyzes membrane phospholipids, such as PtdCho (phosphatidylcholine), producing the free headgroup and PtdOH (phosphatidic acid; signaling molecule on its own). Involved in the inhibition of actin-based motility and endocytosis. Its inhibition causes complete collapse of F-actin organization. The chain is Phospholipase D C (pldC) from Dictyostelium discoideum (Social amoeba).